We begin with the raw amino-acid sequence, 214 residues long: Thymidylate kinase (214 aa).

10–17 (GGEGAGKS) contributes to the ATP binding site.

The protein belongs to the thymidylate kinase family.

The enzyme catalyses dTMP + ATP = dTDP + ADP. In terms of biological role, phosphorylation of dTMP to form dTDP in both de novo and salvage pathways of dTTP synthesis. The protein is Thymidylate kinase of Brucella abortus (strain S19).